Here is a 517-residue protein sequence, read N- to C-terminus: 2,3-bisphosphoglycerate-independent phosphoglycerate mutase (517 aa).

Positions 14 and 64 each coordinate Mn(2+). S64 acts as the Phosphoserine intermediate in catalysis. Substrate-binding positions include H125, 155 to 156 (RD), R187, R193, 263 to 266 (RSDR), and K337. Residues D404, H408, D445, H446, and H464 each coordinate Mn(2+).

Belongs to the BPG-independent phosphoglycerate mutase family. Monomer. It depends on Mn(2+) as a cofactor.

The enzyme catalyses (2R)-2-phosphoglycerate = (2R)-3-phosphoglycerate. Its pathway is carbohydrate degradation; glycolysis; pyruvate from D-glyceraldehyde 3-phosphate: step 3/5. In terms of biological role, catalyzes the interconversion of 2-phosphoglycerate and 3-phosphoglycerate. The polypeptide is 2,3-bisphosphoglycerate-independent phosphoglycerate mutase (Nitrosococcus oceani (strain ATCC 19707 / BCRC 17464 / JCM 30415 / NCIMB 11848 / C-107)).